Consider the following 348-residue polypeptide: D-erythrose-4-phosphate dehydrogenase (348 aa).

Residues 12-13 (RI) and R81 contribute to the NAD(+) site. Residues 154–156 (SCT), R200, 213–214 (TK), and R236 each bind substrate. C155 functions as the Nucleophile in the catalytic mechanism. Residue N318 participates in NAD(+) binding.

This sequence belongs to the glyceraldehyde-3-phosphate dehydrogenase family. Epd subfamily. In terms of assembly, homotetramer.

Its subcellular location is the cytoplasm. It carries out the reaction D-erythrose 4-phosphate + NAD(+) + H2O = 4-phospho-D-erythronate + NADH + 2 H(+). The protein operates within cofactor biosynthesis; pyridoxine 5'-phosphate biosynthesis; pyridoxine 5'-phosphate from D-erythrose 4-phosphate: step 1/5. In terms of biological role, catalyzes the NAD-dependent conversion of D-erythrose 4-phosphate to 4-phosphoerythronate. The polypeptide is D-erythrose-4-phosphate dehydrogenase (Salmonella paratyphi A (strain ATCC 9150 / SARB42)).